Consider the following 606-residue polypeptide: Proton myo-inositol cotransporter hmit-1.1 (606 aa).

Residues 1–20 are Cytoplasmic-facing; sequence MVAVAAFSSSGQDKPAHTPK. The chain crosses the membrane as a helical span at residues 21–41; sequence LGLFVYILAAASVIGGFLFGY. Topologically, residues 42 to 63 are extracellular; that stretch reads DTSVVSAAMLYMPDAPGLKPMD. A helical transmembrane segment spans residues 64–84; that stretch reads TVWQEVLVSISPGMAAVGSLM. Over 85–96 the chain is Cytoplasmic; sequence SGTSSDYIGRRK. A helical transmembrane segment spans residues 97 to 117; sequence VILGASAIFTIGALVCAASVN. Position 118 (lysine 118) is a topological domain, extracellular. A helical membrane pass occupies residues 119–139; it reads IMLLVGRVLLGIAIGFASMIV. At 140–152 the chain is on the cytoplasmic side; that stretch reads PVYLGETAPTHVR. A helical membrane pass occupies residues 153-173; it reads GMLVAAFALMISFGQVVANIT. Topologically, residues 174–188 are extracellular; the sequence is GGAFSYIDPYNVGWR. Residues 189–209 form a helical membrane-spanning segment; the sequence is LMFAFAAVPSIIQFVCFMFLP. Topologically, residues 210 to 278 are cytoplasmic; it reads ETPRWLYENG…RILKTPHVLK (69 aa). The chain crosses the membrane as a helical span at residues 279 to 299; that stretch reads ACFIGSMLQAFQQLAGINTIL. At 300–317 the chain is on the extracellular side; the sequence is YYTADIIRSSGISNNHTT. Asparagine 314 carries an N-linked (GlcNAc...) asparagine glycan. A helical membrane pass occupies residues 318–338; it reads IWISVLLSLCNFIGPFVPMSL. Topologically, residues 339–345 are cytoplasmic; the sequence is IEKVGRR. The chain crosses the membrane as a helical span at residues 346–366; it reads IIFLFSCGLVVLSLVFIGVAF. Over 367-464 the chain is Extracellular; it reads LLVNHDSAAT…EKYYCDTKYT (98 aa). Asparagine 387 and asparagine 445 each carry an N-linked (GlcNAc...) asparagine glycan. The helical transmembrane segment at 465-485 threads the bilayer; that stretch reads LLPIIACGVYLLTFSSGFTSL. Residues 486–501 are Cytoplasmic-facing; it reads PWVLNSEFYPMWARST. Residues 502–522 traverse the membrane as a helical segment; sequence CVAISTTSNWVFNLIIALTYL. The Extracellular portion of the chain corresponds to 523–531; that stretch reads SLTQVIGKY. A helical membrane pass occupies residues 532 to 552; the sequence is GAFWLYAGLTVIAFIFILFLV. The Cytoplasmic portion of the chain corresponds to 553 to 606; it reads PETKGYSIEEVEMLFMNKKQRREAESRRRETVTEVRSRMNSTVSFGQHNEVHKY.

This sequence belongs to the major facilitator superfamily. Sugar transporter (TC 2.A.1.1) family. In terms of tissue distribution, expressed in the intestine.

The protein localises to the cell membrane. The catalysed reaction is myo-inositol(out) + H(+)(out) = myo-inositol(in) + H(+)(in). Its function is as follows. H(+)-myo-inositol cotransporter. Probably by promoting the transport of myo-inositol regulates intracellular osmosis in response to hyperosmotic stress. This chain is Proton myo-inositol cotransporter hmit-1.1, found in Caenorhabditis elegans.